A 350-amino-acid chain; its full sequence is Biotin synthase (350 aa).

Positions 41 to 268 (NEVQISRLLS…KSRVRLSAGR (228 aa)) constitute a Radical SAM core domain. The [4Fe-4S] cluster site is built by Cys56, Cys60, and Cys63. Residues Cys100, Cys131, Cys191, and Arg263 each coordinate [2Fe-2S] cluster.

The protein belongs to the radical SAM superfamily. Biotin synthase family. In terms of assembly, homodimer. The cofactor is [4Fe-4S] cluster. Requires [2Fe-2S] cluster as cofactor.

The catalysed reaction is (4R,5S)-dethiobiotin + (sulfur carrier)-SH + 2 reduced [2Fe-2S]-[ferredoxin] + 2 S-adenosyl-L-methionine = (sulfur carrier)-H + biotin + 2 5'-deoxyadenosine + 2 L-methionine + 2 oxidized [2Fe-2S]-[ferredoxin]. It functions in the pathway cofactor biosynthesis; biotin biosynthesis; biotin from 7,8-diaminononanoate: step 2/2. In terms of biological role, catalyzes the conversion of dethiobiotin (DTB) to biotin by the insertion of a sulfur atom into dethiobiotin via a radical-based mechanism. This is Biotin synthase from Shewanella sp. (strain ANA-3).